The primary structure comprises 490 residues: Phenylacetaldehyde synthase (490 aa).

L-phenylalanine-binding residues include Pro-92, His-193, and His-308. At Lys-309 the chain carries N6-(pyridoxal phosphate)lysine. Phe-338 serves as a coordination point for L-phenylalanine.

It belongs to the group II decarboxylase family. Homodimer. The cofactor is pyridoxal 5'-phosphate. In terms of tissue distribution, expressed in roots, rosette leaves, stems, cauline leaves and flowers.

It catalyses the reaction L-phenylalanine + O2 + H2O + H(+) = 2-phenylacetaldehyde + H2O2 + NH4(+) + CO2. It carries out the reaction L-dopa + O2 + H2O + H(+) = 3,4-dihydroxyphenylacetaldehyde + H2O2 + NH4(+) + CO2. Bifunctional enzyme that catalyzes the decarboxylation of L-phenylalanine to 2-phenylethylamine, which is then oxidized to form 2-phenylacetaldehyde, a constituent of floral scent. 2-phenylacetaldehyde is a precursor of 2-phenylethanol, another constituent of floral scent. Catalyzes both the decarboxylation and deamination of L-dopa to 3,4-dihydroxylphenylacetaldehyde (DHPAA). The polypeptide is Phenylacetaldehyde synthase (Arabidopsis thaliana (Mouse-ear cress)).